Consider the following 1391-residue polypeptide: DNA-directed RNA polymerase subunit beta' (1391 aa).

Zn(2+) is bound by residues Cys-72, Cys-74, Cys-87, and Cys-90. Asp-462, Asp-464, and Asp-466 together coordinate Mg(2+). Zn(2+) contacts are provided by Cys-816, Cys-890, Cys-897, and Cys-900.

The protein belongs to the RNA polymerase beta' chain family. In terms of assembly, the RNAP catalytic core consists of 2 alpha, 1 beta, 1 beta' and 1 omega subunit. When a sigma factor is associated with the core the holoenzyme is formed, which can initiate transcription. Mg(2+) serves as cofactor. It depends on Zn(2+) as a cofactor.

It catalyses the reaction RNA(n) + a ribonucleoside 5'-triphosphate = RNA(n+1) + diphosphate. In terms of biological role, DNA-dependent RNA polymerase catalyzes the transcription of DNA into RNA using the four ribonucleoside triphosphates as substrates. This is DNA-directed RNA polymerase subunit beta' from Neisseria gonorrhoeae (strain NCCP11945).